Here is an 885-residue protein sequence, read N- to C-terminus: DNA mismatch repair protein MutS (885 aa).

626–633 (GPNMGGKS) is a binding site for ATP.

It belongs to the DNA mismatch repair MutS family.

In terms of biological role, this protein is involved in the repair of mismatches in DNA. It is possible that it carries out the mismatch recognition step. This protein has a weak ATPase activity. This is DNA mismatch repair protein MutS from Burkholderia lata (strain ATCC 17760 / DSM 23089 / LMG 22485 / NCIMB 9086 / R18194 / 383).